The chain runs to 552 residues: MNEASERPNHFIRHIIEEDLAQGKHSFIRTRFPPEPNGYLHIGHAKSICLNFGLAQDYQGECHLRFDDTNPEKEEQEYIESIKRDVQWLGFAWSGAVRYSSDYFESLYGYAIELIQKELAYVDELNAEQMREYRGTLTAPGKNSPFRDRTVEDNIELFKKMRAGGFAEGAACLRAKIDMASPFMIMRDPVLYRIKFAEHHQLGDQWCIYPMYDFTHCISDALEGITHSLCTLEFQDNRRLYDWVLENISIDCHPRQYEFSRLNLEHTLMSKRKLHLLVKEKKVTGWDDPRMPTLSGLKRRGYTPASIREFCHRIGVTKQDNQVEMSALEACIREDLNQNAPRALAVLDPVQLIIDNRSDEKEWLTVPNHPNNPGMGHRQMPFNRVLYIDRADFREEANKKYKRLVLGKEVRLRHAYVVKAKYVEKNAQGMITAIHCEYDPETLNKDPSDGRKIRGVIHWVSADDAVPAEIRLYHHLLTASHADTCLFLEAFNPESLFIRQGFVEPSLANTQEGKTYQFEREGYFCTDKDSSEKHLVFNRTVSLRGESALYDL.

Positions 34 to 44 (PEPNGYLHIGH) match the 'HIGH' region motif. ATP contacts are provided by residues 35 to 37 (EPN) and 41 to 47 (HIGHAKS). Residues D67 and Y212 each contribute to the L-glutamine site. Residues T231, 261–262 (RL), and 269–271 (MSK) each bind ATP. A 'KMSKS' region motif is present at residues 268–272 (LMSKR).

It belongs to the class-I aminoacyl-tRNA synthetase family. Monomer.

The protein localises to the cytoplasm. The enzyme catalyses tRNA(Gln) + L-glutamine + ATP = L-glutaminyl-tRNA(Gln) + AMP + diphosphate. This Hamiltonella defensa subsp. Acyrthosiphon pisum (strain 5AT) protein is Glutamine--tRNA ligase.